We begin with the raw amino-acid sequence, 60 residues long: Large ribosomal subunit protein uL30 (60 aa).

The protein belongs to the universal ribosomal protein uL30 family. Part of the 50S ribosomal subunit.

The sequence is that of Large ribosomal subunit protein uL30 from Lactobacillus johnsonii (strain CNCM I-12250 / La1 / NCC 533).